Here is a 255-residue protein sequence, read N- to C-terminus: CDP-diacylglycerol pyrophosphatase (255 aa).

Residues 5 to 27 (LLITVALIAVLALTTLVAWRYLF) traverse the membrane as a helical segment.

The protein belongs to the Cdh family.

The protein localises to the cell inner membrane. It carries out the reaction a CDP-1,2-diacyl-sn-glycerol + H2O = a 1,2-diacyl-sn-glycero-3-phosphate + CMP + 2 H(+). Its pathway is phospholipid metabolism; CDP-diacylglycerol degradation; phosphatidate from CDP-diacylglycerol: step 1/1. This Cronobacter sakazakii (strain ATCC BAA-894) (Enterobacter sakazakii) protein is CDP-diacylglycerol pyrophosphatase.